The following is a 515-amino-acid chain: 1-pyrroline-5-carboxylate dehydrogenase (515 aa).

Catalysis depends on residues glutamate 286 and cysteine 320.

This sequence belongs to the aldehyde dehydrogenase family. RocA subfamily.

The catalysed reaction is L-glutamate 5-semialdehyde + NAD(+) + H2O = L-glutamate + NADH + 2 H(+). It participates in amino-acid degradation; L-proline degradation into L-glutamate; L-glutamate from L-proline: step 2/2. The sequence is that of 1-pyrroline-5-carboxylate dehydrogenase from Anoxybacillus flavithermus (strain DSM 21510 / WK1).